Here is a 340-residue protein sequence, read N- to C-terminus: Ketol-acid reductoisomerase (NADP(+)) (340 aa).

In terms of domain architecture, KARI N-terminal Rossmann spans 1–182 (MRVYYDRDCD…GGGRSGIIET (182 aa)). Residues 24–27 (YGSQ), R48, S51, S53, and 83–86 (DELQ) each bind NADP(+). Residue H108 is part of the active site. An NADP(+)-binding site is contributed by G134. In terms of domain architecture, KARI C-terminal knotted spans 183–329 (NFRQECETDL…EKLRGMMPWI (147 aa)). Mg(2+)-binding residues include D191, E195, E227, and E231. S252 provides a ligand contact to substrate.

The protein belongs to the ketol-acid reductoisomerase family. Requires Mg(2+) as cofactor.

The enzyme catalyses (2R)-2,3-dihydroxy-3-methylbutanoate + NADP(+) = (2S)-2-acetolactate + NADPH + H(+). The catalysed reaction is (2R,3R)-2,3-dihydroxy-3-methylpentanoate + NADP(+) = (S)-2-ethyl-2-hydroxy-3-oxobutanoate + NADPH + H(+). It functions in the pathway amino-acid biosynthesis; L-isoleucine biosynthesis; L-isoleucine from 2-oxobutanoate: step 2/4. The protein operates within amino-acid biosynthesis; L-valine biosynthesis; L-valine from pyruvate: step 2/4. Its function is as follows. Involved in the biosynthesis of branched-chain amino acids (BCAA). Catalyzes an alkyl-migration followed by a ketol-acid reduction of (S)-2-acetolactate (S2AL) to yield (R)-2,3-dihydroxy-isovalerate. In the isomerase reaction, S2AL is rearranged via a Mg-dependent methyl migration to produce 3-hydroxy-3-methyl-2-ketobutyrate (HMKB). In the reductase reaction, this 2-ketoacid undergoes a metal-dependent reduction by NADPH to yield (R)-2,3-dihydroxy-isovalerate. The polypeptide is Ketol-acid reductoisomerase (NADP(+)) (Cereibacter sphaeroides (strain ATCC 17025 / ATH 2.4.3) (Rhodobacter sphaeroides)).